A 640-amino-acid polypeptide reads, in one-letter code: MSSVTVTLPDGSTLEVASGATVEDVAHEIGPGLGRDTVAGKIDHELVAKEEPISEDCEIEIVTDQSDEYLDVLRHTAAHVLAQAIRRHHPDAKLTIGPYTDEGFYYDIANVELDADDLDEIQAEAASIIDDDLDVERVEYDRADAREHYADNEFKREILDAEAAGDGPVSFYTQGDFEDLCKGPHVDSTGEIGGFEVLETSAAYWRGDEERETLTRVYGTAFPTESDLQEYLARREEAKERDHRKLGREMDLFSIPDVTGPGLPLYHPNGKTVLRELSEYVRGLNSEMGYDEVETPHLFRTELWKQSGHYDNYVDDMFLLDVNDEEYGLKPMNCPGHATIFNEGSWSYRDLPVRYFEDGKVYRKEQRGELSGLSRVWAFTIDDGHVFARADQIEAEVRRLMDTITEVLDTFDLDYEVALATRPEKSVGSDDIWEQSERQLREVLDQQGVDYDVEPGDGAFYGPKIDFGFEDALGRSWDGPTVQLDFNMPDRFDLEYTGSDNDAHQPVMIHRALYGSYERFFMVLIEHYNGRFPTWLAPEQVRILPVTDDNLGYAHRVKNELGDYRVEVEDRDWTVGKKIQQAHDDNVPYMLVVGDDEEDADAVSVRDRQEREGKGVDLAEFRAHLDSEVDGKRTEPDFLD.

One can recognise a TGS domain in the interval 1–63; it reads MSSVTVTLPD…SEDCEIEIVT (63 aa). The catalytic stretch occupies residues 242–533; sequence DHRKLGREMD…LIEHYNGRFP (292 aa). Positions 334, 385, and 510 each coordinate Zn(2+).

Belongs to the class-II aminoacyl-tRNA synthetase family. In terms of assembly, homodimer. Zn(2+) is required as a cofactor.

It localises to the cytoplasm. It carries out the reaction tRNA(Thr) + L-threonine + ATP = L-threonyl-tRNA(Thr) + AMP + diphosphate + H(+). Its function is as follows. Catalyzes the attachment of threonine to tRNA(Thr) in a two-step reaction: L-threonine is first activated by ATP to form Thr-AMP and then transferred to the acceptor end of tRNA(Thr). The sequence is that of Threonine--tRNA ligase from Halobacterium salinarum (strain ATCC 29341 / DSM 671 / R1).